The primary structure comprises 542 residues: CTP synthase (542 aa).

An amidoligase domain region spans residues 1–265 (MARYVFITGG…DSEILSAFGI (265 aa)). Serine 13 serves as a coordination point for CTP. Serine 13 is a binding site for UTP. 14-19 (SLGKGI) lines the ATP pocket. Tyrosine 54 is a binding site for L-glutamine. Residue aspartate 71 coordinates ATP. Aspartate 71 and glutamate 139 together coordinate Mg(2+). Residues 146-148 (DIE), 186-191 (KTKPTQ), and lysine 222 each bind CTP. Residues 186 to 191 (KTKPTQ) and lysine 222 contribute to the UTP site. In terms of domain architecture, Glutamine amidotransferase type-1 spans 291–541 (TIAIVGKYTG…IAATVEQSRL (251 aa)). Alanine 353 contributes to the L-glutamine binding site. The Nucleophile; for glutamine hydrolysis role is filled by cysteine 380. Residues 381 to 384 (FGMQ), glutamate 404, and arginine 469 contribute to the L-glutamine site. Catalysis depends on residues histidine 514 and glutamate 516.

It belongs to the CTP synthase family. As to quaternary structure, homotetramer.

It catalyses the reaction UTP + L-glutamine + ATP + H2O = CTP + L-glutamate + ADP + phosphate + 2 H(+). It carries out the reaction L-glutamine + H2O = L-glutamate + NH4(+). The enzyme catalyses UTP + NH4(+) + ATP = CTP + ADP + phosphate + 2 H(+). The protein operates within pyrimidine metabolism; CTP biosynthesis via de novo pathway; CTP from UDP: step 2/2. Allosterically activated by GTP, when glutamine is the substrate; GTP has no effect on the reaction when ammonia is the substrate. The allosteric effector GTP functions by stabilizing the protein conformation that binds the tetrahedral intermediate(s) formed during glutamine hydrolysis. Inhibited by the product CTP, via allosteric rather than competitive inhibition. Catalyzes the ATP-dependent amination of UTP to CTP with either L-glutamine or ammonia as the source of nitrogen. Regulates intracellular CTP levels through interactions with the four ribonucleotide triphosphates. In Bartonella bacilliformis (strain ATCC 35685 / KC583 / Herrer 020/F12,63), this protein is CTP synthase.